A 426-amino-acid chain; its full sequence is Torsin-4A (426 aa).

Residues 41–60 (QPGTEPDSGTGTLGPTGSLG) are disordered. A compositionally biased stretch (low complexity) spans 48-60 (SGTGTLGPTGSLG). Phosphoserine is present on residues Ser58 and Ser76. Phosphothreonine is present on Thr84. Ser101 bears the Phosphoserine mark. The chain crosses the membrane as a helical span at residues 117-133 (CLLLLVAIVGFQVLNAI). ATP is bound at residue 189 to 196 (GPSGVGKS).

This sequence belongs to the ClpA/ClpB family. Torsin subfamily.

It is found in the membrane. The protein is Torsin-4A (Tor4a) of Mus musculus (Mouse).